Consider the following 220-residue polypeptide: Fructose-6-phosphate aldolase 1 (220 aa).

Catalysis depends on Lys-85, which acts as the Schiff-base intermediate with substrate.

This sequence belongs to the transaldolase family. Type 3A subfamily. In terms of assembly, homodecamer.

Its subcellular location is the cytoplasm. The enzyme catalyses beta-D-fructose 6-phosphate = dihydroxyacetone + D-glyceraldehyde 3-phosphate. Its function is as follows. Catalyzes the reversible formation of fructose 6-phosphate from dihydroxyacetone and D-glyceraldehyde 3-phosphate via an aldolization reaction. This chain is Fructose-6-phosphate aldolase 1 (fsaA), found in Escherichia coli O157:H7.